Here is a 125-residue protein sequence, read N- to C-terminus: Large ribosomal subunit protein uL22c (125 aa).

Belongs to the universal ribosomal protein uL22 family. Part of the 50S ribosomal subunit.

The protein localises to the plastid. It is found in the chloroplast. Functionally, this protein binds specifically to 23S rRNA. The globular domain of the protein is located near the polypeptide exit tunnel on the outside of the subunit, while an extended beta-hairpin is found that lines the wall of the exit tunnel in the center of the 70S ribosome. The polypeptide is Large ribosomal subunit protein uL22c (rpl22) (Nuphar advena (Common spatterdock)).